We begin with the raw amino-acid sequence, 110 residues long: MKFVLLFGVLLVTLFSYSSAEMLDDFDQADEDELLSLIEKEEARKDCIPKHHECTSNKHGCCGGHLFKYKCQCTTVVTQSGEETERCFCGTPPHHKAAELVVGFGKKIFG.

The first 20 residues, 1–20 (MKFVLLFGVLLVTLFSYSSA), serve as a signal peptide directing secretion. A propeptide spanning residues 21–44 (EMLDDFDQADEDELLSLIEKEEAR) is cleaved from the precursor. Disulfide bonds link C47–C62, C54–C71, C61–C89, and C73–C87.

The protein belongs to the neurotoxin 19 (CSTX) family. 03 subfamily. As to expression, expressed by the venom gland.

Its subcellular location is the secreted. In Lycosa singoriensis (Wolf spider), this protein is U1-lycotoxin-Ls1aa.